The chain runs to 175 residues: Gamma-crystallin A (175 aa).

2 Beta/gamma crystallin 'Greek key' domains span residues 2 to 40 (GKIT…RVDV) and 41 to 83 (HSWF…RLIP). The connecting peptide stretch occupies residues 84–88 (QHTGT). Beta/gamma crystallin 'Greek key' domains lie at 89-129 (FRMR…RVLE) and 130-172 (GSWV…RRVM).

It belongs to the beta/gamma-crystallin family.

Functionally, crystallins are the dominant structural components of the vertebrate eye lens. The chain is Gamma-crystallin A (CRYGA) from Bos taurus (Bovine).